The sequence spans 292 residues: Xyloglucan endotransglucosylase/hydrolase protein 2 (292 aa).

Residues 1 to 24 form the signal peptide; it reads MNRIRYCFELVSVLFLMFTANARA. The 195-residue stretch at 25 to 219 folds into the GH16 domain; it reads RGRGAIDFDV…WAYAPFKAQY (195 aa). The active-site Nucleophile is the Glu-106. Glu-110 serves as the catalytic Proton donor. Residues Glu-110, 123–125, 133–135, 198–199, and Gly-203 contribute to the xyloglucan site; these read QTN, GRE, and NW. Intrachain disulfides connect Cys-227-Cys-239 and Cys-275-Cys-288. A xyloglucan-binding site is contributed by Arg-280.

This sequence belongs to the glycosyl hydrolase 16 family. XTH group 1 subfamily. Contains at least one intrachain disulfide bond essential for its enzymatic activity.

It is found in the secreted. It localises to the cell wall. The protein resides in the extracellular space. Its subcellular location is the apoplast. It carries out the reaction breaks a beta-(1-&gt;4) bond in the backbone of a xyloglucan and transfers the xyloglucanyl segment on to O-4 of the non-reducing terminal glucose residue of an acceptor, which can be a xyloglucan or an oligosaccharide of xyloglucan.. Its function is as follows. May catalyze xyloglucan endohydrolysis (XEH) and/or endotransglycosylation (XET). Cleaves and religates xyloglucan polymers, an essential constituent of the primary cell wall, and thereby participates in cell wall construction of growing tissues. This is Xyloglucan endotransglucosylase/hydrolase protein 2 (XTH2) from Arabidopsis thaliana (Mouse-ear cress).